The chain runs to 179 residues: Iron sulfur cluster assembly protein 1, mitochondrial (179 aa).

The tract at residues 160-179 is disordered; sequence RSVKQPTLGPEAAQAETIAT.

This sequence belongs to the NifU family. Component of the core Fe-S cluster (ISC) assembly machinery. The cofactor is [2Fe-2S] cluster.

The protein resides in the mitochondrion matrix. It participates in cofactor biosynthesis; iron-sulfur cluster biosynthesis. Functionally, scaffold protein for the de novo synthesis of iron-sulfur (Fe-S) clusters within mitochondria, which is required for maturation of both mitochondrial and cytoplasmic [2Fe-2S] and [4Fe-4S] proteins. First, a [2Fe-2S] cluster is transiently assembled on the scaffold protein ISU1. In a second step, the cluster is released from ISU1, transferred to a glutaredoxin, followed by the formation of mitochondrial [2Fe-2S] proteins, the synthesis of [4Fe-4S] clusters and their target-specific insertion into the recipient apoproteins. Cluster assembly on ISU1 depends on the function of the cysteine desulfurase complex NFS1-ISD11, which serves as the sulfur donor for cluster synthesis, the iron-binding protein frataxin as the putative iron donor, and the electron transfer chain comprised of ferredoxin reductase and ferredoxin, which receive their electrons from NADH. The sequence is that of Iron sulfur cluster assembly protein 1, mitochondrial (ISU1) from Debaryomyces hansenii (strain ATCC 36239 / CBS 767 / BCRC 21394 / JCM 1990 / NBRC 0083 / IGC 2968) (Yeast).